Reading from the N-terminus, the 361-residue chain is Chorismate synthase (361 aa).

The tract at residues 37–59 (TEEDLQHDLDRRRPGTSRYTTPR) is disordered. A compositionally biased stretch (basic and acidic residues) spans 40 to 49 (DLQHDLDRRR). 2 residues coordinate NADP(+): Arg-48 and Arg-54. FMN is bound by residues 125-127 (RSS), 238-239 (NA), Gly-278, 293-297 (KPTSS), and Arg-319.

The protein belongs to the chorismate synthase family. Homotetramer. Requires FMNH2 as cofactor.

It carries out the reaction 5-O-(1-carboxyvinyl)-3-phosphoshikimate = chorismate + phosphate. Its pathway is metabolic intermediate biosynthesis; chorismate biosynthesis; chorismate from D-erythrose 4-phosphate and phosphoenolpyruvate: step 7/7. Catalyzes the anti-1,4-elimination of the C-3 phosphate and the C-6 proR hydrogen from 5-enolpyruvylshikimate-3-phosphate (EPSP) to yield chorismate, which is the branch point compound that serves as the starting substrate for the three terminal pathways of aromatic amino acid biosynthesis. This reaction introduces a second double bond into the aromatic ring system. This Erwinia tasmaniensis (strain DSM 17950 / CFBP 7177 / CIP 109463 / NCPPB 4357 / Et1/99) protein is Chorismate synthase.